The primary structure comprises 70 residues: Small ribosomal subunit protein bS21 (70 aa).

This sequence belongs to the bacterial ribosomal protein bS21 family.

This Bordetella avium (strain 197N) protein is Small ribosomal subunit protein bS21.